Reading from the N-terminus, the 379-residue chain is Flagellin A (379 aa).

Coiled coils occupy residues 104-129 (NSAS…IAET) and 314-341 (QNRL…IKDT).

Belongs to the bacterial flagellin family. In terms of assembly, heteromer of multiple flagellin subunits including FlaA, FlaB, FlaC, FlaD and FlaE.

The protein localises to the secreted. Its subcellular location is the bacterial flagellum. Functionally, flagellin is the subunit protein which polymerizes to form the filaments of bacterial flagella. FlaA is required to form a core or scaffold into which the other flagellins are inserted to provide structural integrity. Essential for flagellar synthesis and motility; important for full virulence. The protein is Flagellin A (flaA) of Vibrio cholerae serotype O1 (strain ATCC 39541 / Classical Ogawa 395 / O395).